Reading from the N-terminus, the 390-residue chain is Cell division protein FtsZ (390 aa).

Residues Gly20–Asn24, Gly106–Gly108, Glu137, Arg141, and Asp184 each bind GTP.

The protein belongs to the FtsZ family. As to quaternary structure, homodimer. Polymerizes to form a dynamic ring structure in a strictly GTP-dependent manner. Interacts directly with several other division proteins.

Its subcellular location is the cytoplasm. Essential cell division protein that forms a contractile ring structure (Z ring) at the future cell division site. The regulation of the ring assembly controls the timing and the location of cell division. One of the functions of the FtsZ ring is to recruit other cell division proteins to the septum to produce a new cell wall between the dividing cells. Binds GTP and shows GTPase activity. The protein is Cell division protein FtsZ of Mycoplasmopsis pulmonis (strain UAB CTIP) (Mycoplasma pulmonis).